Here is a 247-residue protein sequence, read N- to C-terminus: Cell division protein ZapD (247 aa).

The protein belongs to the ZapD family. In terms of assembly, interacts with FtsZ.

It localises to the cytoplasm. In terms of biological role, cell division factor that enhances FtsZ-ring assembly. Directly interacts with FtsZ and promotes bundling of FtsZ protofilaments, with a reduction in FtsZ GTPase activity. This chain is Cell division protein ZapD, found in Salmonella choleraesuis (strain SC-B67).